The primary structure comprises 295 residues: Protein LplC (295 aa).

6 helical membrane-spanning segments follow: residues 21-41 (ILFLGGVGAITILPFLYIIAG), 81-101 (VSIFITVVGTAVQLFFTFTMA), 116-136 (LNLVIFSMLFSGGMIPTYLVV), 142-162 (LDTYWALILPMAINPFNLIII), 199-219 (VIATFALFYAVGIWNDFFHAL), and 260-280 (GIKLAVIVIATLPILAVYPFL). Residues 79–280 (MGVSIFITVV…LPILAVYPFL (202 aa)) enclose the ABC transmembrane type-1 domain.

The protein belongs to the binding-protein-dependent transport system permease family. CysTW subfamily.

The protein resides in the cell membrane. The sequence is that of Protein LplC (lplC) from Bacillus subtilis (strain 168).